Reading from the N-terminus, the 90-residue chain is Probable Fe(2+)-trafficking protein (90 aa).

Belongs to the Fe(2+)-trafficking protein family.

Could be a mediator in iron transactions between iron acquisition and iron-requiring processes, such as synthesis and/or repair of Fe-S clusters in biosynthetic enzymes. The sequence is that of Probable Fe(2+)-trafficking protein from Pseudoalteromonas translucida (strain TAC 125).